Reading from the N-terminus, the 178-residue chain is Twist-related protein (178 aa).

The bHLH domain occupies 20–71 (QQRACANRRERQRTKELNDAFTLLRKLIPSMPSDKMSKIHTLRIATDYISFL).

In terms of assembly, efficient DNA binding requires dimerization with another bHLH protein. Homodimer. Forms a heterodimer with hlh-2. As to expression, expressed in defecation-associated muscles and neuron-like cells in the head at the L1 stage. In later larvae, expressed in SM cells and their descendants. Not expressed in differentiated body wall or sex muscles.

Its subcellular location is the nucleus. Functionally, acts as a transcriptional regulator. Involved in postembryonic mesodermal cell fate specification. Activates ceh-24 and egl-15 during mesodermal patterning. The polypeptide is Twist-related protein (hlh-8) (Caenorhabditis elegans).